The sequence spans 939 residues: Tyrosine-protein kinase Shark (939 aa).

In terms of domain architecture, SH2 1 spans W10–L106. 3 ANK repeats span residues D153–S185, F186–I218, and N220–S252. Positions W288–V403 constitute an SH2 2 domain. 2 disordered regions span residues E410–H446 and A476–G505. The span at E496–G505 shows a compositional bias: polar residues. Residues L662–F921 enclose the Protein kinase domain. Residues I668–V676 and K698 each bind ATP. D789 (proton acceptor) is an active-site residue. Y927 carries the post-translational modification Phosphotyrosine.

It belongs to the protein kinase superfamily. Tyr protein kinase family. As to quaternary structure, interacts with drpr; this is required for the recruitment of drpr and glial cells to severed axons and for the phagocytosis of axonal debris by glial cells following axon injury. As to expression, gastrulation embryos show expression in ectodermal cells along the cephalic furrow and ventral midline. Proctodeum, stomodeum and their derived structures (foregut, atrium, pharynx, esophagus and hindgut) continue to show expression from stage 8-9 to late embryos. Other ectodermally derived structures (frontal sac, salivary gland and labium) and developing tracheal system also show expression.

It is found in the cytoplasm. It catalyses the reaction L-tyrosyl-[protein] + ATP = O-phospho-L-tyrosyl-[protein] + ADP + H(+). Following axon injury, required for recruitment of drpr and glial cells to severed axons and for glial clearance of severed axons from the central nervous system. Together with Src42a and drpr, promotes the migration of macrophages to sites of wounding as part of a signaling cascade where Scr42a detects production of hydrogen peroxide at wound sites which triggers phosphorylation of drpr and subsequent recruitment and activation of shark. May be involved in signal transduction on the apical surface of ectodermal epithelial cells, regulating their polarity during invagination. Crumbs (crb) may be the intracellular signal. The chain is Tyrosine-protein kinase Shark from Drosophila melanogaster (Fruit fly).